A 446-amino-acid chain; its full sequence is Pre-rRNA-processing protein crb3/ipi3 (446 aa).

WD repeat units lie at residues Ile-74–Phe-113, Ala-116–Ser-155, Gly-172–Thr-214, Ala-216–Val-257, and Ser-294–Arg-333.

It belongs to the WD repeat IPI3/WDR18 family. In terms of assembly, component of the RIX1 complex, composed of ipi1, rix1/ipi2 and crb3/ipi3 in a 1:2:2 stoichiometry. The complex interacts (via rix1) with mdn1 (via its hexameric AAA ATPase ring) and the pre-60S ribosome particles. Interacts with rix1, gcr3 and Las1.

The protein localises to the nucleus. The protein resides in the chromosome. Functionally, required for both pre-rRNA processing and heterochromatic gene silencing. Its function is as follows. Component of the RIX1 complex required for processing of ITS2 sequences from 35S pre-rRNA. The chain is Pre-rRNA-processing protein crb3/ipi3 (crb3) from Schizosaccharomyces pombe (strain 972 / ATCC 24843) (Fission yeast).